The following is a 176-amino-acid chain: Co-chaperone protein HscB homolog (176 aa).

The J domain maps to 7–79; that stretch reads THFSLFGLPE…LKRATYLLHL (73 aa).

This sequence belongs to the HscB family. In terms of assembly, interacts with HscA and stimulates its ATPase activity.

Co-chaperone involved in the maturation of iron-sulfur cluster-containing proteins. Seems to help targeting proteins to be folded toward HscA. The polypeptide is Co-chaperone protein HscB homolog (Ralstonia nicotianae (strain ATCC BAA-1114 / GMI1000) (Ralstonia solanacearum)).